The following is a 25-amino-acid chain: Small ribosomal subunit protein eS32 (25 aa).

The disordered stretch occupies residues 1-25 (MRAKWRKKRVRRLKRKRRKVRARSK).

It belongs to the eukaryotic ribosomal protein eS32 family. Component of the small ribosomal subunit.

This is Small ribosomal subunit protein eS32 (RPL41) from Eremothecium gossypii (strain ATCC 10895 / CBS 109.51 / FGSC 9923 / NRRL Y-1056) (Yeast).